Reading from the N-terminus, the 729-residue chain is MARPIQITIMGDADQLSETLDQASEEVSAFGEQAKGLALAAGGAIAVGIGAGIAEALEREAGNDVLAAQLGATPAEAKRLGEAAGEVYSAGYGESVADANEALKGLWQQGLVPAGATADDNGEHFEKAMDVATVLGDEVGPTSNAVGQMLKTGMAKNADEAFDILVRGAQEGANKSEDLLDTFNEYGVQFKGIGLDGKTAMGLLSQGLQGGARDADLVADSLKEFGLIVRAGGDEVNAAYKSMGLNGAEMTKAIAQGGPVAKDALDKTLDGLRKIKDPAERIATAVTLFGTQAEDMQDALLKLDPSSAVETLGKVDGAAKSAGETMHDNAATKIKAFTRGLQTGLVDFIGGTVLPILEKFKPALEGIGSTMATVGGFVSEHSTTFKVVAGIITAVLLPALIQWGVQSTINAGKAVVAWVTSSATAVIESTKQALAHAKVVAGWIASGVQAGLNAAKVVAGWVLMGAQSMIQGARMAAAWLLAMGPIPLIIAAIVGLVVLIVANWDKIWAYTKKVFQWLWDWVKKIFNWLEDLFLNFTGPGLLIKHWDKSRSATKNTFNNVKNFAKDALNAVVNFVKGLPGRILSAASSLLSAGKRIGGYVIDGIKNGLSKLGGFASSLASAVGRAAKGAINGVIDLLNWATPNKLGWGKLSIDLPDNPIPKIRAMGGPASGWTRVGERGPEDVFLPNGSTVRPNHALSGSGGVTVNVQTNADPFAIGREVAWALRTSPA.

Residues isoleucine 9–lysine 35 adopt a coiled-coil conformation.

The protein belongs to the P2likevirus tape measure protein family.

Functionally, serves as a base for tail tube protein polymerization and acts as a template for tail length determination. The protein is Probable tape measure protein of Streptomyces phage phiC31 (Bacteriophage phi-C31).